The primary structure comprises 292 residues: MNNHFKCIGIVGHPRHPTALTTHEMLYRWLCAKGYEVMVEQQIAQELQLKNVKTGTLAEIGQQADLAVVVGGDGNMLGAARTLARYDIKVIGINRGNLGFLTDLDPDNAHQQLADVLDGHYISEKRFLLEAQVCQQDCQKRISTAINEVVLHPGKVAHMIEFEVYIDEVFAFSQRSDGLIISTPTGSTAYSLSAGGPILTPSLDAITLVPMFPHTLSARPLVINSSSTIRLRFSHRRNDLEISCDSQIALPIQEGEDVLIRRCDYHLNLIHPKDYSYFNTLSSKLGWSKKLF.

The active-site Proton acceptor is Asp73. Residues 73–74 (DG), 147–148 (NE), His158, Arg175, Asp177, 188–193 (TAYSLS), and Gln247 each bind NAD(+).

This sequence belongs to the NAD kinase family. The cofactor is a divalent metal cation.

It is found in the cytoplasm. It catalyses the reaction NAD(+) + ATP = ADP + NADP(+) + H(+). Functionally, involved in the regulation of the intracellular balance of NAD and NADP, and is a key enzyme in the biosynthesis of NADP. Catalyzes specifically the phosphorylation on 2'-hydroxyl of the adenosine moiety of NAD to yield NADP. The sequence is that of NAD kinase from Enterobacter sp. (strain 638).